The chain runs to 490 residues: MQLTKDTEISTINRQMSDFSELSQILPLHQISKIKDILENENPLPKEKLASHLTMIILMANLASQKRKDVPVKRSTFLKYQRSISKTLQYDSSTKTVSFEYHLKDPSKLIKGLEDVVSPYRFVVGVHEKPDDVMSHLSAVHMRKEAGRKRDLGNKINDEITKIAETQETIWGFVGKTMDLIEARTTRPTTKAAYNLLLQATFMNCCRADDLKNTDIKTFEVIPDKHLGRMLRAFVPETKTGTRFVYFFPCKGRCDPLLALDSYLQWTDPIPKTRTTDEDARYDYQLLRNSLLGSYDGFISKQSDESIFKIPNGPKAHLGRHVTASYLSNNEMDKEATLYGNWSAAREEGVSRVAKARYMHTIEKSPPSYLFAFLSGFYNITAERACELVDPNSNPCEQDKNIPMISDIETLMARYGKNAEIIPMDVLVFLSSYARFKNNEGKEYKLQARSSRGVPDFPDNGRTALYNALTAAHVKRRKISIVVGRSIDTS.

The region spanning 152–437 (LGNKINDEIT…VFLSSYARFK (286 aa)) is the Tyr recombinase Flp-type domain. The O-(3'-phospho-DNA)-tyrosine intermediate role is filled by tyrosine 358.

Belongs to the 'phage' integrase family.

Functionally, catalyzes the recombination between the large inverted repetitions of the plasmid. The sequence is that of Recombinase Flp protein (R) from Zygosaccharomyces rouxii.